The following is a 391-amino-acid chain: Putative penicillin-binding protein PbpX (391 aa).

The helical transmembrane segment at 21–40 threads the bilayer; it reads GKLLFGLLAVMVCITIWNAL. Positions 44–76 are disordered; that stretch reads SEENEPSQETAAVSNTDQKKEVKKKTAKKSEEQ. Polar residues predominate over residues 50–59; that stretch reads SQETAAVSNT.

It belongs to the beta-lactamase family.

The protein resides in the cell membrane. The sequence is that of Putative penicillin-binding protein PbpX (pbpX) from Bacillus subtilis (strain 168).